The following is a 379-amino-acid chain: Omega-3 fatty acid desaturase, endoplasmic reticulum (379 aa).

A helical membrane pass occupies residues leucine 52–leucine 72. A Histidine box-1 motif is present at residues histidine 97–histidine 101. The Histidine box-2 signature appears at histidine 133–histidine 137. The next 2 membrane-spanning stretches (helical) occupy residues threonine 213–leucine 233 and phenylalanine 236–leucine 256. Residues histidine 300 to histidine 304 carry the Histidine box-3 motif.

Belongs to the fatty acid desaturase type 1 family.

It is found in the endoplasmic reticulum membrane. The protein operates within lipid metabolism; polyunsaturated fatty acid biosynthesis. In terms of biological role, ER (microsomal) omega-3 fatty acid desaturase introduces the third double bond in the biosynthesis of 18:3 fatty acids, important constituents of plant membranes. It is thought to use cytochrome b5 as an electron donor and to act on fatty acids esterified to phosphatidylcholine and, possibly, other phospholipids. The polypeptide is Omega-3 fatty acid desaturase, endoplasmic reticulum (FAD3) (Nicotiana tabacum (Common tobacco)).